Reading from the N-terminus, the 132-residue chain is Small ribosomal subunit protein uS8 (132 aa).

The protein belongs to the universal ribosomal protein uS8 family. In terms of assembly, part of the 30S ribosomal subunit. Contacts proteins S5 and S12.

Its function is as follows. One of the primary rRNA binding proteins, it binds directly to 16S rRNA central domain where it helps coordinate assembly of the platform of the 30S subunit. This chain is Small ribosomal subunit protein uS8, found in Streptococcus agalactiae serotype Ia (strain ATCC 27591 / A909 / CDC SS700).